Consider the following 177-residue polypeptide: Adenine phosphoribosyltransferase (177 aa).

Belongs to the purine/pyrimidine phosphoribosyltransferase family. Homodimer.

It localises to the cytoplasm. It carries out the reaction AMP + diphosphate = 5-phospho-alpha-D-ribose 1-diphosphate + adenine. Its pathway is purine metabolism; AMP biosynthesis via salvage pathway; AMP from adenine: step 1/1. Functionally, catalyzes a salvage reaction resulting in the formation of AMP, that is energically less costly than de novo synthesis. The protein is Adenine phosphoribosyltransferase of Mycobacteroides abscessus (strain ATCC 19977 / DSM 44196 / CCUG 20993 / CIP 104536 / JCM 13569 / NCTC 13031 / TMC 1543 / L948) (Mycobacterium abscessus).